The chain runs to 331 residues: Putative NAD(P)H nitroreductase acg (331 aa).

FMN-binding positions include Q28–W32 and R316.

The protein belongs to the nitroreductase family. FMN is required as a cofactor.

This Mycobacterium tuberculosis (strain CDC 1551 / Oshkosh) protein is Putative NAD(P)H nitroreductase acg (acg).